The primary structure comprises 64 residues: Putative neurotoxin-G (64 aa).

The first 19 residues, 1 to 19 (MFAMVTVTVLLLISSGIFC), serve as a signal peptide directing secretion. Cystine bridges form between Cys-25–Cys-45, Cys-32–Cys-54, and Cys-36–Cys-56.

As to expression, expressed by the venom gland.

The protein localises to the secreted. This Lychas mucronatus (Chinese swimming scorpion) protein is Putative neurotoxin-G.